The sequence spans 410 residues: LL-diaminopimelate aminotransferase (410 aa).

2 residues coordinate substrate: Tyr15 and Gly42. Pyridoxal 5'-phosphate-binding positions include Tyr72, 108-109 (AK), Tyr132, Asn188, Tyr219, and 247-249 (SFS). The substrate site is built by Lys109, Tyr132, and Asn188. Position 250 is an N6-(pyridoxal phosphate)lysine (Lys250). 2 residues coordinate pyridoxal 5'-phosphate: Arg258 and Asn293. Substrate contacts are provided by Asn293 and Arg389.

The protein belongs to the class-I pyridoxal-phosphate-dependent aminotransferase family. LL-diaminopimelate aminotransferase subfamily. As to quaternary structure, homodimer. Requires pyridoxal 5'-phosphate as cofactor.

The catalysed reaction is (2S,6S)-2,6-diaminopimelate + 2-oxoglutarate = (S)-2,3,4,5-tetrahydrodipicolinate + L-glutamate + H2O + H(+). It functions in the pathway amino-acid biosynthesis; L-lysine biosynthesis via DAP pathway; LL-2,6-diaminopimelate from (S)-tetrahydrodipicolinate (aminotransferase route): step 1/1. Its function is as follows. Involved in the synthesis of meso-diaminopimelate (m-DAP or DL-DAP), required for both lysine and peptidoglycan biosynthesis. Catalyzes the direct conversion of tetrahydrodipicolinate to LL-diaminopimelate. The sequence is that of LL-diaminopimelate aminotransferase from Bacteroides fragilis (strain YCH46).